The chain runs to 638 residues: Factor of DNA methylation 3 (638 aa).

A coiled-coil region spans residues 318-497 (FNRIFADHEK…RALISNLRDM (180 aa)).

In terms of biological role, acts in association with FDM4 and FDM5 for RNA-directed DNA methylation (RdDM). This is Factor of DNA methylation 3 from Arabidopsis thaliana (Mouse-ear cress).